Consider the following 71-residue polypeptide: Translation initiation factor IF-1 (71 aa).

In terms of domain architecture, S1-like spans 1–71; it reads MSKDDLIQFT…LTKGRVIHRH (71 aa).

Belongs to the IF-1 family. As to quaternary structure, component of the 30S ribosomal translation pre-initiation complex which assembles on the 30S ribosome in the order IF-2 and IF-3, IF-1 and N-formylmethionyl-tRNA(fMet); mRNA recruitment can occur at any time during PIC assembly.

Its subcellular location is the cytoplasm. Its function is as follows. One of the essential components for the initiation of protein synthesis. Stabilizes the binding of IF-2 and IF-3 on the 30S subunit to which N-formylmethionyl-tRNA(fMet) subsequently binds. Helps modulate mRNA selection, yielding the 30S pre-initiation complex (PIC). Upon addition of the 50S ribosomal subunit IF-1, IF-2 and IF-3 are released leaving the mature 70S translation initiation complex. The sequence is that of Translation initiation factor IF-1 from Rickettsia conorii (strain ATCC VR-613 / Malish 7).